The primary structure comprises 454 residues: Chromosomal replication initiator protein DnaA (454 aa).

Residues M1–Y79 form a domain I, interacts with DnaA modulators region. The domain II stretch occupies residues Y79–S117. A domain III, AAA+ region region spans residues N118 to S334. ATP is bound by residues G162, G164, K165, and T166. Positions R335–K454 are domain IV, binds dsDNA.

Belongs to the DnaA family. Oligomerizes as a right-handed, spiral filament on DNA at oriC.

It localises to the cytoplasm. In terms of biological role, plays an essential role in the initiation and regulation of chromosomal replication. ATP-DnaA binds to the origin of replication (oriC) to initiate formation of the DNA replication initiation complex once per cell cycle. Binds the DnaA box (a 9 base pair repeat at the origin) and separates the double-stranded (ds)DNA. Forms a right-handed helical filament on oriC DNA; dsDNA binds to the exterior of the filament while single-stranded (ss)DNA is stabiized in the filament's interior. The ATP-DnaA-oriC complex binds and stabilizes one strand of the AT-rich DNA unwinding element (DUE), permitting loading of DNA polymerase. After initiation quickly degrades to an ADP-DnaA complex that is not apt for DNA replication. Binds acidic phospholipids. The polypeptide is Chromosomal replication initiator protein DnaA (Buchnera aphidicola subsp. Acyrthosiphon pisum (strain 5A)).